The following is a 500-amino-acid chain: MQLVSIFLFISFLFLLRKWKKYLNNSQTKKLPPGPWKLPFIGGMHHLAGGLPHRVLRDLAEKYGPLMHLQLGEVSAVVVTSPEMAKQVLKTHDIAFASRPKLLAMDIICYNRRDIAFSPYGDYWRQMRKICIMEVLSAKSVRSFSSIRHDEVVRLIDSIQPCFTSGELVNFTERIIWFTSSMTCRSAFGQVLKEQEVFIKLIREVISLAEGFDVADIFPSYKFLHGFGGAKQKLLNAHRKVDSIVEDVIKEHKKNLATRKSDDAIGGEDLVDALVRLMNDKSLQFPINNDNIKAVIIDLFAAGTETSSTTTVWAMAEMLKNPSVFAKAQAKVREAFRDKVTFDENDVEELKYLKLVIKETMRLHAPVPLLVPRECREETEINGYTIPVKTKVMVNVWALGRDPKYWDDAESFKPERFEQCSIDFIGNNFEYLPFGGGRRICPGISFGLANVYLPLAQLLYHFDWKLPTGMEPKDLDLTESAGITAARKGDLYLIATPHQP.

C441 is a binding site for heme.

Belongs to the cytochrome P450 family. The cofactor is heme.

This chain is Cytochrome P450 71D7 (CYP71D7), found in Solanum chacoense (Chaco potato).